Here is an 880-residue protein sequence, read N- to C-terminus: Alanine--tRNA ligase (880 aa).

Residues H569, H573, C671, and H675 each coordinate Zn(2+).

It belongs to the class-II aminoacyl-tRNA synthetase family. In terms of assembly, homotetramer. Requires Zn(2+) as cofactor.

The protein resides in the cytoplasm. The catalysed reaction is tRNA(Ala) + L-alanine + ATP = L-alanyl-tRNA(Ala) + AMP + diphosphate. Catalyzes the attachment of alanine to tRNA(Ala) in a two-step reaction: alanine is first activated by ATP to form Ala-AMP and then transferred to the acceptor end of tRNA(Ala). Also edits incorrectly charged Ser-tRNA(Ala) and Gly-tRNA(Ala) via its editing domain. The polypeptide is Alanine--tRNA ligase (Buchnera aphidicola subsp. Baizongia pistaciae (strain Bp)).